A 399-amino-acid chain; its full sequence is Glutathione S-transferase LANCL1 (399 aa).

The residue at position 2 (A2) is an N-acetylalanine. Position 142 is an N6-acetyllysine (K142). A Zn(2+)-binding site is contributed by C276. K317 contacts glutathione. Positions 322 and 323 each coordinate Zn(2+). 364–367 contributes to the glutathione binding site; that stretch reads RTPD.

The protein belongs to the LanC-like protein family. As to quaternary structure, interacts with the C-terminal of STOM. Interacts with the EPS8 SH3 domain. Interaction with EPS8 is inhibited by glutathione binding. Strongly expressed in the brain, testis and skeletal muscle. Expressed in the neurons of the cerebellum, the germinal cells of the seminiferous tubules in testis, in liver hepoatocytes and in cardiac myocytes.

The protein resides in the cytoplasm. It localises to the cell membrane. It catalyses the reaction RX + glutathione = an S-substituted glutathione + a halide anion + H(+). It carries out the reaction 1-chloro-2,4-dinitrobenzene + glutathione = 2,4-dinitrophenyl-S-glutathione + chloride + H(+). Functions as a glutathione transferase. Catalyzes conjugation of the glutathione (GSH) to artificial substrates 1-chloro-2,4-dinitrobenzene (CDNB) and p-nitrophenyl acetate. Mitigates neuronal oxidative stress during normal postnatal development and in response to oxidative stresses probably through GSH antioxidant defense mechanism. May play a role in EPS8 signaling. Binds glutathione. The chain is Glutathione S-transferase LANCL1 from Rattus norvegicus (Rat).